A 453-amino-acid polypeptide reads, in one-letter code: Zinc finger and BTB domain-containing protein 44 (453 aa).

K4 participates in a covalent cross-link: Glycyl lysine isopeptide (Lys-Gly) (interchain with G-Cter in SUMO2). In terms of domain architecture, BTB spans 31–98 (CDITIRVQDR…AYTATLSINT (68 aa)). Residues S135, S159, S161, S165, S191, S194, and S199 each carry the phosphoserine modification. Residue T200 is modified to Phosphothreonine. The segment at 241 to 265 (QPEKAKQAENTRTLELPGPSEAGRR) is disordered. K290 is covalently cross-linked (Glycyl lysine isopeptide (Lys-Gly) (interchain with G-Cter in SUMO2)). Disordered regions lie at residues 295–324 (SDEEVHEEVSQPVSASQSSLSDQQTVPGSE) and 336–368 (SSSIGSVDEGVTEGLPTLQSTSSTNAHADEDDR). Residues 304–318 (SQPVSASQSSLSDQQ) are compositionally biased toward low complexity. Polar residues predominate over residues 352-361 (TLQSTSSTNA). 2 C2H2-type zinc fingers span residues 399-421 (FQCPTCGVRFTRIQNLKQHMLIH) and 427-449 (FQCDCCGKKFTRAYSLKMHRLKH).

It is found in the nucleus. The protein is Zinc finger and BTB domain-containing protein 44 (Zbtb44) of Rattus norvegicus (Rat).